The following is a 494-amino-acid chain: UDP-N-acetylmuramoyl-L-alanyl-D-glutamate--L-lysine ligase (494 aa).

S30 is a binding site for UDP-N-acetyl-alpha-D-muramoyl-L-alanyl-D-glutamate. 110-116 (GTNGKTS) lines the ATP pocket. Residues 152–153 (TT), S179, and R187 each bind UDP-N-acetyl-alpha-D-muramoyl-L-alanyl-D-glutamate. The residue at position 219 (K219) is an N6-carboxylysine. The short motif at 406–409 (DNPA) is the L-lysine recognition motif element.

Belongs to the MurCDEF family. MurE subfamily. In terms of processing, carboxylation is probably crucial for Mg(2+) binding and, consequently, for the gamma-phosphate positioning of ATP.

It localises to the cytoplasm. It carries out the reaction UDP-N-acetyl-alpha-D-muramoyl-L-alanyl-D-glutamate + L-lysine + ATP = UDP-N-acetyl-alpha-D-muramoyl-L-alanyl-gamma-D-glutamyl-L-lysine + ADP + phosphate + H(+). The protein operates within cell wall biogenesis; peptidoglycan biosynthesis. Catalyzes the addition of L-lysine to the nucleotide precursor UDP-N-acetylmuramoyl-L-alanyl-D-glutamate (UMAG) in the biosynthesis of bacterial cell-wall peptidoglycan. The polypeptide is UDP-N-acetylmuramoyl-L-alanyl-D-glutamate--L-lysine ligase (Staphylococcus aureus (strain bovine RF122 / ET3-1)).